The primary structure comprises 174 residues: Co-chaperone protein HscB homolog (174 aa).

Residues 2–74 (NYFELFKFPP…IRRAEHMLSL (73 aa)) enclose the J domain.

Belongs to the HscB family. As to quaternary structure, interacts with HscA and stimulates its ATPase activity.

Functionally, co-chaperone involved in the maturation of iron-sulfur cluster-containing proteins. Seems to help targeting proteins to be folded toward HscA. This chain is Co-chaperone protein HscB homolog, found in Shewanella oneidensis (strain ATCC 700550 / JCM 31522 / CIP 106686 / LMG 19005 / NCIMB 14063 / MR-1).